We begin with the raw amino-acid sequence, 835 residues long: Protein translocase subunit SecA (835 aa).

Residues Gln-85, 103-107 (GEGKT), and Asp-492 each bind ATP. The Zn(2+) site is built by Cys-819, Cys-821, Cys-830, and Cys-831.

Belongs to the SecA family. In terms of assembly, monomer and homodimer. Part of the essential Sec protein translocation apparatus which comprises SecA, SecYEG and auxiliary proteins SecDF. Other proteins may also be involved. Zn(2+) serves as cofactor.

It is found in the cell membrane. It localises to the cytoplasm. It carries out the reaction ATP + H2O + cellular proteinSide 1 = ADP + phosphate + cellular proteinSide 2.. In terms of biological role, part of the Sec protein translocase complex. Interacts with the SecYEG preprotein conducting channel. Has a central role in coupling the hydrolysis of ATP to the transfer of proteins into and across the cell membrane, serving as an ATP-driven molecular motor driving the stepwise translocation of polypeptide chains across the membrane. This Clostridium botulinum (strain Loch Maree / Type A3) protein is Protein translocase subunit SecA.